Here is a 450-residue protein sequence, read N- to C-terminus: Probable rhamnogalacturonase E (450 aa).

The N-terminal stretch at 1 to 22 is a signal peptide; it reads MTWSTSFLSVHFFAFITTSIHA. Cys43 and Cys69 are oxidised to a cystine. N-linked (GlcNAc...) asparagine glycosylation is found at Asn54, Asn92, and Asn131. Asp222 acts as the Proton donor in catalysis. A disulfide bridge links Cys224 with Cys241. Asn242 and Asn257 each carry an N-linked (GlcNAc...) asparagine glycan. The active site involves His297. 2 N-linked (GlcNAc...) asparagine glycosylation sites follow: Asn324 and Asn329. Disulfide bonds link Cys347–Cys353 and Cys375–Cys384.

The protein belongs to the glycosyl hydrolase 28 family.

The protein localises to the secreted. Functionally, pectinolytic enzymes consist of four classes of enzymes: pectine lyase, polygalacturonase, pectin methylesterase and rhamnogalacturonase. Hydrolyzes alpha-D-galacturonopyranosyl-(1,2)-alpha-L-rhamnopyranosyl linkages in the backbone of the hairy regions of pectins. In Aspergillus niger, this protein is Probable rhamnogalacturonase E (rhgE).